The primary structure comprises 583 residues: 1-deoxy-D-xylulose-5-phosphate synthase (583 aa).

Residues His-74 and Gly-115 to Ser-117 contribute to the thiamine diphosphate site. Asp-146 contacts Mg(2+). Thiamine diphosphate-binding positions include Gly-147–Gly-148, Asn-175, Phe-244, and Glu-327. Asn-175 is a binding site for Mg(2+).

It belongs to the transketolase family. DXPS subfamily. As to quaternary structure, homodimer. Requires Mg(2+) as cofactor. Thiamine diphosphate serves as cofactor.

It catalyses the reaction D-glyceraldehyde 3-phosphate + pyruvate + H(+) = 1-deoxy-D-xylulose 5-phosphate + CO2. It participates in metabolic intermediate biosynthesis; 1-deoxy-D-xylulose 5-phosphate biosynthesis; 1-deoxy-D-xylulose 5-phosphate from D-glyceraldehyde 3-phosphate and pyruvate: step 1/1. Functionally, catalyzes the acyloin condensation reaction between C atoms 2 and 3 of pyruvate and glyceraldehyde 3-phosphate to yield 1-deoxy-D-xylulose-5-phosphate (DXP). The protein is 1-deoxy-D-xylulose-5-phosphate synthase of Myxococcus xanthus (strain DK1622).